Consider the following 364-residue polypeptide: Dihydroorotate dehydrogenase (quinone) (364 aa).

FMN is bound by residues 78–82 (AGFDK) and Thr-102. Lys-82 is a substrate binding site. Residue 127–131 (NRMGF) participates in substrate binding. Residues Asn-156 and Asn-189 each contribute to the FMN site. Substrate is bound at residue Asn-189. Ser-192 functions as the Nucleophile in the catalytic mechanism. Substrate is bound at residue Asn-194. Lys-227 and Thr-255 together coordinate FMN. Residue 256–257 (NT) participates in substrate binding. FMN contacts are provided by residues Gly-285, Gly-314, and 335-336 (YT).

Belongs to the dihydroorotate dehydrogenase family. Type 2 subfamily. In terms of assembly, monomer. It depends on FMN as a cofactor.

The protein resides in the cell membrane. It carries out the reaction (S)-dihydroorotate + a quinone = orotate + a quinol. It functions in the pathway pyrimidine metabolism; UMP biosynthesis via de novo pathway; orotate from (S)-dihydroorotate (quinone route): step 1/1. Functionally, catalyzes the conversion of dihydroorotate to orotate with quinone as electron acceptor. This chain is Dihydroorotate dehydrogenase (quinone), found in Thermosynechococcus vestitus (strain NIES-2133 / IAM M-273 / BP-1).